A 35-amino-acid polypeptide reads, in one-letter code: Probable endonuclease 4 (35 aa).

Glutamate 15 is a Zn(2+) binding site.

The protein belongs to the AP endonuclease 2 family. Zn(2+) is required as a cofactor.

The catalysed reaction is Endonucleolytic cleavage to 5'-phosphooligonucleotide end-products.. Its function is as follows. Endonuclease IV plays a role in DNA repair. It cleaves phosphodiester bonds at apurinic or apyrimidinic (AP) sites, generating a 3'-hydroxyl group and a 5'-terminal sugar phosphate. The sequence is that of Probable endonuclease 4 (nfo) from Yersinia enterocolitica.